The following is a 428-amino-acid chain: Enolase (428 aa).

A (2R)-2-phosphoglycerate-binding site is contributed by Q162. Catalysis depends on E204, which acts as the Proton donor. Mg(2+)-binding residues include D241, E283, and D310. (2R)-2-phosphoglycerate is bound by residues K335, R364, S365, and K386. K335 serves as the catalytic Proton acceptor.

It belongs to the enolase family. The cofactor is Mg(2+).

It is found in the cytoplasm. Its subcellular location is the secreted. The protein localises to the cell surface. It catalyses the reaction (2R)-2-phosphoglycerate = phosphoenolpyruvate + H2O. Its pathway is carbohydrate degradation; glycolysis; pyruvate from D-glyceraldehyde 3-phosphate: step 4/5. Functionally, catalyzes the reversible conversion of 2-phosphoglycerate (2-PG) into phosphoenolpyruvate (PEP). It is essential for the degradation of carbohydrates via glycolysis. This Rhodococcus jostii (strain RHA1) protein is Enolase.